The primary structure comprises 271 residues: Putative phosphoenolpyruvate synthase regulatory protein (271 aa).

152–159 is an ADP binding site; it reads GVSRCGKT.

The protein belongs to the pyruvate, phosphate/water dikinase regulatory protein family. PSRP subfamily.

It catalyses the reaction [pyruvate, water dikinase] + ADP = [pyruvate, water dikinase]-phosphate + AMP + H(+). The catalysed reaction is [pyruvate, water dikinase]-phosphate + phosphate + H(+) = [pyruvate, water dikinase] + diphosphate. Functionally, bifunctional serine/threonine kinase and phosphorylase involved in the regulation of the phosphoenolpyruvate synthase (PEPS) by catalyzing its phosphorylation/dephosphorylation. This chain is Putative phosphoenolpyruvate synthase regulatory protein, found in Legionella pneumophila (strain Lens).